Reading from the N-terminus, the 523-residue chain is Sorting nexin-2 (523 aa).

Residues Met1 to Thr104 form a disordered region. Composition is skewed to low complexity over residues Leu27 to Pro48 and Ser93 to Thr104. Ser97 carries the phosphoserine modification. Residues Thr101 and Thr104 each carry the phosphothreonine modification. 2 positions are modified to phosphoserine: Ser117 and Ser119. The 130-residue stretch at Phe140–Arg269 folds into the PX domain. The a 1,2-diacyl-sn-glycero-3-phospho-(1D-myo-inositol-3-phosphate) site is built by Arg183, Ser185, Lys211, and Arg235. Ser185 carries the phosphoserine modification. An interaction with RhoG region spans residues Gln260–Ala523. Ser277 carries the phosphoserine modification. Positions Gly278–Met295 are membrane-binding amphipathic helix. In terms of domain architecture, BAR spans Met299–Ala523. Lys473 carries the post-translational modification N6-acetyllysine.

The protein belongs to the sorting nexin family. Predominantly forms heterodimers with BAR domain-containing sorting nexins SNX5, SNX6 and SNX32; can self-associate to form homodimers. The heterodimers are proposed to self-assemble into helical arrays on the membrane to stabilize and expand local membrane curvature underlying endosomal tubule formation. Thought to be a component of the originally described retromer complex (also called SNX-BAR retromer) which is a pentamer containing the heterotrimeric retromer cargo-selective complex (CSC), also described as vacuolar protein sorting subcomplex (VPS), and a heterodimeric membrane-deforming subcomplex formed between SNX1 or SNX2 and SNX5 or SNX6 (also called SNX-BAR subcomplex); the respective CSC and SNX-BAR subcomplexes associate with low affinity. Interacts with SNX5, SNX6, SNX32, VPS26A, VPS29, VPS35, FNBP1, KALRN, RHOG (GDP-bound form).

It localises to the early endosome membrane. The protein resides in the cell projection. Its subcellular location is the lamellipodium. In terms of biological role, involved in several stages of intracellular trafficking. Interacts with membranes containing phosphatidylinositol 3-phosphate (PtdIns(3P)) or phosphatidylinositol 3,5-bisphosphate (PtdIns(3,5)P2). Acts in part as component of the retromer membrane-deforming SNX-BAR subcomplex. The SNX-BAR retromer mediates retrograde transport of cargo proteins from endosomes to the trans-Golgi network (TGN) and is involved in endosome-to-plasma membrane transport for cargo protein recycling. The SNX-BAR subcomplex functions to deform the donor membrane into a tubular profile called endosome-to-TGN transport carrier (ETC). Can sense membrane curvature and has in vitro vesicle-to-membrane remodeling activity. Required for retrograde endosome-to-TGN transport of TGN38. Promotes KALRN- and RHOG-dependent but retromer-independent membrane remodeling such as lamellipodium formation; the function is dependent on GEF activity of KALRN. The sequence is that of Sorting nexin-2 (SNX2) from Pongo abelii (Sumatran orangutan).